The following is a 316-amino-acid chain: 4-hydroxy-3-methylbut-2-enyl diphosphate reductase (316 aa).

Cysteine 17 serves as a coordination point for [4Fe-4S] cluster. Residues histidine 46 and histidine 79 each contribute to the (2E)-4-hydroxy-3-methylbut-2-enyl diphosphate site. Residues histidine 46 and histidine 79 each contribute to the dimethylallyl diphosphate site. Positions 46 and 79 each coordinate isopentenyl diphosphate. Cysteine 101 is a [4Fe-4S] cluster binding site. Histidine 129 is a (2E)-4-hydroxy-3-methylbut-2-enyl diphosphate binding site. A dimethylallyl diphosphate-binding site is contributed by histidine 129. Residue histidine 129 participates in isopentenyl diphosphate binding. Glutamate 131 functions as the Proton donor in the catalytic mechanism. (2E)-4-hydroxy-3-methylbut-2-enyl diphosphate is bound at residue threonine 170. [4Fe-4S] cluster is bound at residue cysteine 200. Positions 228, 229, 230, and 273 each coordinate (2E)-4-hydroxy-3-methylbut-2-enyl diphosphate. The dimethylallyl diphosphate site is built by serine 228, serine 229, asparagine 230, and serine 273. Isopentenyl diphosphate-binding residues include serine 228, serine 229, asparagine 230, and serine 273.

This sequence belongs to the IspH family. Requires [4Fe-4S] cluster as cofactor.

It catalyses the reaction isopentenyl diphosphate + 2 oxidized [2Fe-2S]-[ferredoxin] + H2O = (2E)-4-hydroxy-3-methylbut-2-enyl diphosphate + 2 reduced [2Fe-2S]-[ferredoxin] + 2 H(+). It carries out the reaction dimethylallyl diphosphate + 2 oxidized [2Fe-2S]-[ferredoxin] + H2O = (2E)-4-hydroxy-3-methylbut-2-enyl diphosphate + 2 reduced [2Fe-2S]-[ferredoxin] + 2 H(+). The protein operates within isoprenoid biosynthesis; dimethylallyl diphosphate biosynthesis; dimethylallyl diphosphate from (2E)-4-hydroxy-3-methylbutenyl diphosphate: step 1/1. It functions in the pathway isoprenoid biosynthesis; isopentenyl diphosphate biosynthesis via DXP pathway; isopentenyl diphosphate from 1-deoxy-D-xylulose 5-phosphate: step 6/6. Functionally, catalyzes the conversion of 1-hydroxy-2-methyl-2-(E)-butenyl 4-diphosphate (HMBPP) into a mixture of isopentenyl diphosphate (IPP) and dimethylallyl diphosphate (DMAPP). Acts in the terminal step of the DOXP/MEP pathway for isoprenoid precursor biosynthesis. The chain is 4-hydroxy-3-methylbut-2-enyl diphosphate reductase from Roseobacter denitrificans (strain ATCC 33942 / OCh 114) (Erythrobacter sp. (strain OCh 114)).